Reading from the N-terminus, the 135-residue chain is MLQPNNTKFRKFQKSRVKGVQSNTDQLRYGKFGIKTVSAARIPARTIEAVRRVITRKFKRLGVIWIRVFPDIAVSGKPAEVRMGKGKGAPQYWVCKVKRGAILFEFDGISPQLAKQAARLADSKLPIKTRFVMYS.

This sequence belongs to the universal ribosomal protein uL16 family.

Its subcellular location is the mitochondrion. The protein is Large ribosomal subunit protein uL16m (RPL16) of Prototheca wickerhamii.